Consider the following 203-residue polypeptide: Cryptic neisserial protein 1 (203 aa).

Positions 1-18 (MRRAILLILTLTVGTSLA) are cleaved as a signal peptide.

The protein belongs to the Cnp family.

It localises to the periplasm. The protein resides in the cytoplasm. The sequence is that of Cryptic neisserial protein 1 from Neisseria gonorrhoeae (strain ATCC 700825 / FA 1090).